We begin with the raw amino-acid sequence, 324 residues long: 1-deoxyxylulose-5-phosphate synthase YajO (324 aa).

Tyr-61 functions as the Proton donor in the catalytic mechanism.

Belongs to the aldo/keto reductase family. Aldo/keto reductase 2 subfamily.

It catalyses the reaction D-ribulose 5-phosphate + AH2 = 1-deoxy-D-xylulose 5-phosphate + A + H2O. NADH, NADPH or ATP do not increase activity. Its function is as follows. Catalyzes the conversion of ribulose 5-phosphate (Ru5P) to 1-deoxy-D-xylulose 5-phosphate (DXP), providing a direct route from pentoses to terpenes. May play a role in biosynthesis of DXP under conditions of thiamine starvation. In Escherichia coli (strain K12), this protein is 1-deoxyxylulose-5-phosphate synthase YajO (yajO).